Here is a 403-residue protein sequence, read N- to C-terminus: Tyrosine--tRNA ligase (403 aa).

The 'HIGH' region motif lies at 42 to 51; the sequence is PTAPDLHLGH. The 'KMSKS' region signature appears at 226 to 230; sequence KMSKS. K229 contributes to the ATP binding site. The S4 RNA-binding domain occupies 336 to 396; sequence MPISAVLNKA…GKKAFGRVTL (61 aa).

This sequence belongs to the class-I aminoacyl-tRNA synthetase family. TyrS type 2 subfamily. Homodimer.

Its subcellular location is the cytoplasm. It catalyses the reaction tRNA(Tyr) + L-tyrosine + ATP = L-tyrosyl-tRNA(Tyr) + AMP + diphosphate + H(+). Catalyzes the attachment of tyrosine to tRNA(Tyr) in a two-step reaction: tyrosine is first activated by ATP to form Tyr-AMP and then transferred to the acceptor end of tRNA(Tyr). This is Tyrosine--tRNA ligase from Pseudomonas syringae pv. syringae (strain B728a).